The following is a 771-amino-acid chain: Putative 8-amino-7-oxononanoate synthase 2 (771 aa).

The tract at residues 1 to 418 is unknown; the sequence is MPTGLGYDFL…TVKAAELGEI (418 aa). Residue Arg407 participates in substrate binding. A KAPA synthase region spans residues 419–771; sequence VLLGTNSYLG…EDLTPQGAAL (353 aa). 485-486 lines the pyridoxal 5'-phosphate pocket; the sequence is GY. Residue His510 participates in substrate binding. Residues Ser556 and 581 to 584 contribute to the pyridoxal 5'-phosphate site; that span reads DESH. Lys615 carries the N6-(pyridoxal phosphate)lysine modification.

This sequence in the C-terminal section; belongs to the class-II pyridoxal-phosphate-dependent aminotransferase family. BioF subfamily. It depends on pyridoxal 5'-phosphate as a cofactor.

It catalyses the reaction 6-carboxyhexanoyl-[ACP] + L-alanine + H(+) = (8S)-8-amino-7-oxononanoate + holo-[ACP] + CO2. Functionally, catalyzes the decarboxylative condensation of pimeloyl-[acyl-carrier protein] and L-alanine to produce 8-amino-7-oxononanoate (AON), [acyl-carrier protein], and carbon dioxide. The chain is Putative 8-amino-7-oxononanoate synthase 2 (bioF2) from Mycobacterium tuberculosis (strain CDC 1551 / Oshkosh).